Here is a 63-residue protein sequence, read N- to C-terminus: Transmembrane protein ZNF593OS (63 aa).

Residues 30 to 50 (LAGVVATVLAVLGLGGSCYAV) traverse the membrane as a helical segment.

The protein resides in the membrane. This chain is Transmembrane protein ZNF593OS, found in Homo sapiens (Human).